We begin with the raw amino-acid sequence, 582 residues long: Choline kinase (582 aa).

A disordered region spans residues 1 to 36 (MVQESRPGSVRSYSVGYQARSRSSSQRRHSLTRQRS). Ser30 bears the Phosphoserine; by PKA mark. Residues Ser48 and Ser51 each carry the phosphoserine modification. Thr54 bears the Phosphothreonine mark. Ser85 is subject to Phosphoserine; by PKA.

This sequence belongs to the choline/ethanolamine kinase family. As to quaternary structure, monomer. Interacts with NAP1. Mg(2+) serves as cofactor.

It is found in the cytoplasm. The enzyme catalyses choline + ATP = phosphocholine + ADP + H(+). It carries out the reaction ethanolamine + ATP = phosphoethanolamine + ADP + H(+). It functions in the pathway phospholipid metabolism; phosphatidylcholine biosynthesis; phosphocholine from choline: step 1/1. In terms of biological role, catalyzes the committed step in the synthesis of phosphatidylcholine by the CDP-choline pathway. Also exhibits ethanolamine kinase activity but it is a poor substrate at 14% efficiency compared with choline. This is Choline kinase from Saccharomyces cerevisiae (strain ATCC 204508 / S288c) (Baker's yeast).